The sequence spans 24 residues: Cytochrome c3-2 (24 aa).

Residues 1 to 24 are disordered; it reads GNAPAADMVLKAPGDAKMTKTAVP.

Post-translationally, binds 4 heme groups per subunit.

It localises to the periplasm. Its function is as follows. Participates in sulfate respiration coupled with phosphorylation by transferring electrons from the enzyme dehydrogenase to ferredoxin. This chain is Cytochrome c3-2, found in Nitratidesulfovibrio vulgaris (Desulfovibrio vulgaris).